The following is a 48-amino-acid chain: CGDINAACKEDCDCCGYTTACDCYWSSSCKCREAAIVIYTAPKKKLTC.

5 disulfide bridges follow: C1–C15, C8–C21, C12–C48, C14–C31, and C23–C29.

This sequence belongs to the neurotoxin 03 (Tx2) family. 05 subfamily. In terms of tissue distribution, expressed by the venom gland.

The protein localises to the secreted. In terms of biological role, insecticidal neurotoxin that reversibly inhibits the N-methyl-D-aspartate (NMDA)-subtype of ionotropic glutamate receptor (GRIN) and inhibits inactivation of insect sodium channels (Nav). Inhibits glutamate uptake in rat brain synaptosomes. In vivo, induces immediate excitatory effects when injected intrathoracically in houseflies and cockroaches. The polypeptide is Delta-ctenitoxin-Pn1b (Phoneutria nigriventer (Brazilian armed spider)).